Consider the following 269-residue polypeptide: Protein NETWORKED 3A (269 aa).

The NAB domain occupies serine 6 to serine 87. Residues serine 87–cysteine 113 form a disordered region. The span at histidine 91 to threonine 103 shows a compositional bias: basic and acidic residues. Residues asparagine 155–threonine 214 are a coiled coil.

Belongs to the NET family.

Its subcellular location is the cytoplasm. It localises to the cytoskeleton. The protein localises to the nucleus membrane. Its function is as follows. Plant-specific actin binding protein. May be part of a membrane-cytoskeletal adapter complex. This Arabidopsis thaliana (Mouse-ear cress) protein is Protein NETWORKED 3A.